Consider the following 508-residue polypeptide: Histidine ammonia-lyase (508 aa).

The segment at residues 139-141 (ASG) is a cross-link (5-imidazolinone (Ala-Gly)). Ser140 carries the post-translational modification 2,3-didehydroalanine (Ser).

It belongs to the PAL/histidase family. Post-translationally, contains an active site 4-methylidene-imidazol-5-one (MIO), which is formed autocatalytically by cyclization and dehydration of residues Ala-Ser-Gly.

It localises to the cytoplasm. The catalysed reaction is L-histidine = trans-urocanate + NH4(+). The protein operates within amino-acid degradation; L-histidine degradation into L-glutamate; N-formimidoyl-L-glutamate from L-histidine: step 1/3. The polypeptide is Histidine ammonia-lyase (Acidiphilium cryptum (strain JF-5)).